A 206-amino-acid chain; its full sequence is Isochorismatase family protein 1B (206 aa).

Belongs to the isochorismatase family.

This chain is Isochorismatase family protein 1B, found in Dictyostelium discoideum (Social amoeba).